Here is a 212-residue protein sequence, read N- to C-terminus: Translation initiation factor IF-3 (212 aa).

The interval 171-212 (PKSASKKGHTPPKTQVEASKQANESAETEEEKKRCHPTKPVL) is disordered. Over residues 182 to 195 (PKTQVEASKQANES) the composition is skewed to polar residues.

It belongs to the IF-3 family. In terms of assembly, monomer.

The protein localises to the cytoplasm. Its function is as follows. IF-3 binds to the 30S ribosomal subunit and shifts the equilibrium between 70S ribosomes and their 50S and 30S subunits in favor of the free subunits, thus enhancing the availability of 30S subunits on which protein synthesis initiation begins. This chain is Translation initiation factor IF-3, found in Porphyromonas gingivalis (strain ATCC 33277 / DSM 20709 / CIP 103683 / JCM 12257 / NCTC 11834 / 2561).